The sequence spans 107 residues: Bombesin (107 aa).

A signal peptide spans 1-26 (MSAIPLNRILPLGFLLIFSFISLSSC). A propeptide spanning residues 27-41 (MEFVEDPNNQGGLNL) is cleaved from the precursor. Gln-42 carries the post-translational modification Pyrrolidone carboxylic acid. The residue at position 55 (Met-55) is a Methionine amide. Residues 56–107 (GKKSLQDTDFEEMESFAKRNVENMKAESERELRHAQLVVRNILEQYLKNMQN) constitute a propeptide that is removed on maturation.

In terms of tissue distribution, expressed by the skin glands.

Its subcellular location is the secreted. In terms of biological role, stimulates smooth muscle contraction. Role in induction of hypothermia, stimulation of DNA replication and release of many gastrointestinal hormones. Possesses insulin-releasing activity. This is Bombesin from Bombina variegata (Yellow-bellied toad).